Reading from the N-terminus, the 242-residue chain is Ras-like protein family member 11A (242 aa).

The interval 17-241 (ESSSDYLLPK…SPKVKAPSAL (225 aa)) is small GTPase-like. GTP contacts are provided by residues 34–41 (GAGRVGKS), 81–85 (DTPGG), and 147–150 (NKGD).

The protein belongs to the small GTPase superfamily. Ras family. Interacts with UBF/UBTF. Widely expressed. Down-regulated in prostate tumors compared to normal prostate tissue. High levels found in colon tumor and normal colon tissue followed by small intestine, liver, jejunum, ileum, bladder and aorta. Lowest levels observed in endothelial cells.

The protein localises to the nucleus. It is found in the nucleolus. The catalysed reaction is GTP + H2O = GDP + phosphate + H(+). Functionally, regulator of rDNA transcription. Acts in cooperation UBF/UBTF and positively regulates RNA polymerase I transcription. In Homo sapiens (Human), this protein is Ras-like protein family member 11A.